The primary structure comprises 829 residues: MNEDAPMDLVDDRFADQSIQDEPVDDGESFYNEDVYVDCEEDEDDDVVPTSENFRLENRYKPSLHTPRELPTIREENREDVRSNTSSRVNTRPPSVLSDKSNDISNMFGFQDGGRAIDQYTDQFYSEGNRAERLFPEAGFLQNSPVRDKQNSWEPSVCHYEKQPTPEVKNNSPGLVFANMSSKKDVTRKQENVRPGKMMPEKVNDENEPKSRRFSPERNTFTTSPMNSTKYLEEKTSTPKRPGGTNRLGTRGLPSFECSTIYDISPQRTSGTPKTYESRHPTNAYTPNSATTSDTVLSNRTIGDNTVQNVLKGVDINLLTALENARKKRDRPQVKPDFRLNSLPRGKLSSTQRPKSDDHSSMTSIVSSSTQNNTGYRKIQEQRNSATSTDLTNSNTSNFTNNTSRVSTAKNDFSRSSRQRNGFSDSSVSTIIPNMNSMTTRDRDGRDSVSSVRTISRASSTMTVGGGNGHMTSGAPKPLRFHVSRLGFGYVPIGETLTMQLEVENTTDRPCKVNARLDSKITCFKVLDNATTMIDPKKAIKVRVAFTPTSLGRYSLYLKAEVAEQNFTQKIPVWGWGGVSKIAPISARNLQPTSNSSEFAMFVSDMKRIAFKLGNSGDRSGFALLTVYDSAMRQVPNSYVRFNPSNGIVIGKNYEKLIEIRIDPSYHDHYGELTNNRTSSAMSTVSTASSMASLRRRVIAGSDFFVQVAWGVEGIRERLRMLEMKHKRRQMIDGLDFTSHPFTDEKCVVYPPPDAYPTISDEDHDLFAASYSNFYINIFSSPDGLNAFRAATVSADKFDNDATVLETSAFRHQTFVNDVTMVPRHTKLM.

Disordered regions lie at residues 1-29 (MNED…DGES), 41-104 (EDED…SNDI), 183-294 (KKDV…TTSD), and 326-471 (RKKR…NGHM). Residues 54-82 (FRLENRYKPSLHTPRELPTIREENREDVR) show a composition bias toward basic and acidic residues. Residues 83–93 (SNTSSRVNTRP) show a composition bias toward polar residues. The span at 183–216 (KKDVTRKQENVRPGKMMPEKVNDENEPKSRRFSP) shows a compositional bias: basic and acidic residues. 2 stretches are compositionally biased toward polar residues: residues 217–230 (ERNT…NSTK) and 266–294 (PQRT…TTSD). The stretch at 314-332 (VDINLLTALENARKKRDRP) forms a coiled coil. 2 stretches are compositionally biased toward low complexity: residues 361–370 (SMTSIVSSST) and 384–408 (NSAT…RVST). Composition is skewed to polar residues over residues 409 to 439 (AKND…NSMT) and 448 to 463 (SVSS…STMT).

It is found in the cytoplasm. The protein resides in the cytoskeleton. Its subcellular location is the microtubule organizing center. The protein localises to the centrosome. It localises to the centriole. Functionally, required both for centrosome duplication and maturation. Required for pericentriolar material (PCM) recruitment. The sequence is that of Spindle-defective protein 2 from Caenorhabditis briggsae.